A 390-amino-acid polypeptide reads, in one-letter code: Putative glutamate--cysteine ligase 2 (390 aa).

It belongs to the glutamate--cysteine ligase type 2 family. YbdK subfamily.

It carries out the reaction L-cysteine + L-glutamate + ATP = gamma-L-glutamyl-L-cysteine + ADP + phosphate + H(+). ATP-dependent carboxylate-amine ligase which exhibits weak glutamate--cysteine ligase activity. This chain is Putative glutamate--cysteine ligase 2, found in Chloroflexus aggregans (strain MD-66 / DSM 9485).